We begin with the raw amino-acid sequence, 534 residues long: Glutamyl-tRNA(Gln) amidotransferase subunit B, mitochondrial (534 aa).

The N-terminal 28 residues, Met-1 to Lys-28, are a transit peptide targeting the mitochondrion.

This sequence belongs to the GatB/GatE family. GatB subfamily. As to quaternary structure, subunit of the heterotrimeric GatCAB amidotransferase (AdT) complex, composed of A, B and C subunits.

It localises to the mitochondrion. It carries out the reaction L-glutamyl-tRNA(Gln) + L-glutamine + ATP + H2O = L-glutaminyl-tRNA(Gln) + L-glutamate + ADP + phosphate + H(+). Its function is as follows. Allows the formation of correctly charged Gln-tRNA(Gln) through the transamidation of misacylated Glu-tRNA(Gln) in the mitochondria. The reaction takes place in the presence of glutamine and ATP through an activated gamma-phospho-Glu-tRNA(Gln). This is Glutamyl-tRNA(Gln) amidotransferase subunit B, mitochondrial from Laccaria bicolor (strain S238N-H82 / ATCC MYA-4686) (Bicoloured deceiver).